The primary structure comprises 508 residues: ATP synthase subunit alpha (508 aa).

Gly169–Thr176 serves as a coordination point for ATP.

It belongs to the ATPase alpha/beta chains family. As to quaternary structure, F-type ATPases have 2 components, CF(1) - the catalytic core - and CF(0) - the membrane proton channel. CF(1) has five subunits: alpha(3), beta(3), gamma(1), delta(1), epsilon(1). CF(0) has three main subunits: a(1), b(2) and c(9-12). The alpha and beta chains form an alternating ring which encloses part of the gamma chain. CF(1) is attached to CF(0) by a central stalk formed by the gamma and epsilon chains, while a peripheral stalk is formed by the delta and b chains.

It localises to the cell inner membrane. The catalysed reaction is ATP + H2O + 4 H(+)(in) = ADP + phosphate + 5 H(+)(out). Its function is as follows. Produces ATP from ADP in the presence of a proton gradient across the membrane. The alpha chain is a regulatory subunit. This chain is ATP synthase subunit alpha, found in Allorhizobium ampelinum (strain ATCC BAA-846 / DSM 112012 / S4) (Agrobacterium vitis (strain S4)).